Reading from the N-terminus, the 274-residue chain is Thiazole synthase (274 aa).

Catalysis depends on lysine 115, which acts as the Schiff-base intermediate with DXP. 1-deoxy-D-xylulose 5-phosphate-binding positions include glycine 176, 202–203, and 224–225; these read AG and NS.

The protein belongs to the ThiG family. As to quaternary structure, homotetramer. Forms heterodimers with either ThiH or ThiS.

The protein resides in the cytoplasm. The catalysed reaction is [ThiS sulfur-carrier protein]-C-terminal-Gly-aminoethanethioate + 2-iminoacetate + 1-deoxy-D-xylulose 5-phosphate = [ThiS sulfur-carrier protein]-C-terminal Gly-Gly + 2-[(2R,5Z)-2-carboxy-4-methylthiazol-5(2H)-ylidene]ethyl phosphate + 2 H2O + H(+). The protein operates within cofactor biosynthesis; thiamine diphosphate biosynthesis. Its function is as follows. Catalyzes the rearrangement of 1-deoxy-D-xylulose 5-phosphate (DXP) to produce the thiazole phosphate moiety of thiamine. Sulfur is provided by the thiocarboxylate moiety of the carrier protein ThiS. In vitro, sulfur can be provided by H(2)S. This chain is Thiazole synthase, found in Psychrobacter arcticus (strain DSM 17307 / VKM B-2377 / 273-4).